A 431-amino-acid chain; its full sequence is GDP-L-galactose phosphorylase 2 (431 aa).

Residue His235 is the Tele-GMP-histidine intermediate of the active site. The segment covering 398 to 407 has biased composition (acidic residues); that stretch reads EEEEEEELEE. Residues 398–417 form a disordered region; sequence EEEEEEELEEQNSMNGGSFT.

This sequence belongs to the GDPGP1 family. Interacts with TLP1. As to expression, expressed in leaves, stems, roots, flowers and siliques.

It localises to the cytoplasm. Its subcellular location is the nucleus. The catalysed reaction is GDP-beta-L-galactose + phosphate = beta-L-galactose 1-phosphate + GDP + H(+). It functions in the pathway cofactor biosynthesis; L-ascorbate biosynthesis via GDP-alpha-D-mannose pathway; L-ascorbate from GDP-alpha-D-mannose: step 2/5. In terms of biological role, catalyzes a reaction of the Smirnoff-Wheeler pathway, the major route to ascorbate biosynthesis in plants. Acts as a phosphorylase rather than as a transferase. Uses preferentially GDP-L-galactose and GDP-D-glucose as substrates. Lower activity with GDP-L-fucose, very low activity with GDP-D-mannose, and no activity with UDP-D-glucose, UDP-D-galactose or ADP-D-glucose. Highly specific for inorganic phosphate as the guanylyl acceptor. In Arabidopsis thaliana (Mouse-ear cress), this protein is GDP-L-galactose phosphorylase 2 (VTC5).